Here is a 955-residue protein sequence, read N- to C-terminus: Aminopeptidase A (955 aa).

Over 1–17 (MDIEDKSSKMHCMKGKH) the chain is Cytoplasmic. The chain crosses the membrane as a helical; Signal-anchor for type II membrane protein span at residues 18 to 38 (VAIICGVVIAVGLILGLGLGL). At 39-955 (GLKPEACNPP…LENSEQPNFV (917 aa)) the chain is on the extracellular side. The segment at 49–69 (EDNGLLSTKPPTTSTPNVTNP) is disordered. Positions 55 to 69 (STKPPTTSTPNVTNP) are enriched in low complexity. 3 N-linked (GlcNAc...) asparagine glycosylation sites follow: Asn65, Asn118, and Asn192. A substrate-binding site is contributed by Glu218. N-linked (GlcNAc...) asparagine glycans are attached at residues Asn312, Asn319, and Asn335. 352–356 (GAMEN) provides a ligand contact to substrate. His388 contacts Zn(2+). The Proton acceptor role is filled by Glu389. Zn(2+)-binding residues include His392 and Glu411. N-linked (GlcNAc...) asparagine glycosylation is found at Asn458, Asn547, Asn584, Asn592, Asn647, Asn674, Asn681, Asn759, Asn766, Asn823, and Asn836. Substrate is bound at residue Arg882.

The protein belongs to the peptidase M1 family. Homodimer; disulfide-linked. Requires Zn(2+) as cofactor.

Its subcellular location is the cell membrane. It carries out the reaction Release of N-terminal glutamate (and to a lesser extent aspartate) from a peptide.. The partially purified protein is inhibited by the aminopeptidase competitive inhibitors amastatin (Leu and acidic inhibitor), and bestatin (Leu inhibitor), by chelating agents EDTA, and 1,10-Phenanthroline, as well as by Zn(2+) ions. Substrate specificity is modulated by Ca(2+), Ba(2+), and Mn(2+) ions which enhances the enzymatic activity for cleavage of acidic residues. Functionally, venom protein that cleaves N-terminal acidic residues from peptides with high potency in presence of calcium. It may have several roles in venom including alteration of blood pressure by cleaving circulating angiotensin-2, general degradation of host tissue, increase of permeability to other venom components, and/or processing of other toxins in the venom. The polypeptide is Aminopeptidase A (Gloydius brevicauda (Korean slamosa snake)).